The primary structure comprises 345 residues: Protoheme IX farnesyltransferase (345 aa).

A run of 9 helical transmembrane segments spans residues 33 to 53 (VMSL…TPIH), 54 to 74 (PLLG…SGAL), 105 to 125 (ATLG…AINW), 126 to 146 (LAAG…TMWL), 154 to 174 (IVIG…AATG), 182 to 202 (LMVL…SLYI), 226 to 246 (QILL…FTGL), 247 to 267 (GGWL…TLAV), and 315 to 335 (ILYL…GLPI).

Belongs to the UbiA prenyltransferase family. Protoheme IX farnesyltransferase subfamily.

It localises to the cell inner membrane. It carries out the reaction heme b + (2E,6E)-farnesyl diphosphate + H2O = Fe(II)-heme o + diphosphate. It functions in the pathway porphyrin-containing compound metabolism; heme O biosynthesis; heme O from protoheme: step 1/1. In terms of biological role, converts heme B (protoheme IX) to heme O by substitution of the vinyl group on carbon 2 of heme B porphyrin ring with a hydroxyethyl farnesyl side group. This is Protoheme IX farnesyltransferase from Caulobacter sp. (strain K31).